The chain runs to 118 residues: Large ribosomal subunit protein bL20c (118 aa).

This sequence belongs to the bacterial ribosomal protein bL20 family.

The protein localises to the plastid. Functionally, binds directly to 23S ribosomal RNA and is necessary for the in vitro assembly process of the 50S ribosomal subunit. It is not involved in the protein synthesizing functions of that subunit. This Cuscuta reflexa (Southern Asian dodder) protein is Large ribosomal subunit protein bL20c (rpl20).